A 190-amino-acid chain; its full sequence is GATA transcription factor 17 (190 aa).

Residues 1-14 (MSEGSEDTKTKLDS) are compositionally biased toward basic and acidic residues. Disordered regions lie at residues 1 to 42 (MSEG…DTKR) and 77 to 101 (RQAA…NDLN). The GATA-type zinc finger occupies 38-92 (GDTKRTCVDCGTIRTPLWRGGPAGPKSLCNACGIKSRKKRQAALGMRSEEKKKNR).

Belongs to the type IV zinc-finger family. Class B subfamily.

The protein localises to the nucleus. Transcriptional regulator that specifically binds 5'-GATA-3' or 5'-GAT-3' motifs within gene promoters. This Arabidopsis thaliana (Mouse-ear cress) protein is GATA transcription factor 17 (GATA17).